The primary structure comprises 435 residues: Methanethiol oxidase (435 aa).

The first 24 residues, 1–24 (MKKHLLAGACALAMGFAVIPGTFA), serve as a signal peptide directing secretion.

This sequence belongs to the selenium-binding protein family. In terms of assembly, homotetramer. Cu cation is required as a cofactor.

It is found in the periplasm. The catalysed reaction is methanethiol + O2 + H2O = hydrogen sulfide + formaldehyde + H2O2 + H(+). Its pathway is organosulfur degradation. With respect to regulation, inhibited by EDTA but not by EGTA. Its function is as follows. Catalyzes the oxidation of methanethiol. Can also degrade ethanethiol, but not methanol, methylamine or dimethylsulfide. The sequence is that of Methanethiol oxidase from Hyphomicrobium sp.